A 370-amino-acid polypeptide reads, in one-letter code: Keratin-associated protein 10-7 (370 aa).

Residues 36–363 are 30 X 5 AA repeats of C-C-X(3); it reads DCPESCCEPP…CSRPACCGPT (328 aa). Tandem repeats lie at residues 41-45, 46-50, 67-71, 89-93, 99-103, 109-113, 114-118, 119-123, 135-139, 145-149, 155-159, 160-164, 172-176, 186-190, 208-212, 218-222, 228-232, 233-237, 238-242, 250-254, 255-259, 265-269, 270-274, 275-279, 287-291, 297-301, 302-306, 321-325, 339-343, and 359-363.

This sequence belongs to the KRTAP type 10 family. Interacts with hair keratins. As to expression, restricted to a narrow region of the hair fiber cuticle, lying approximately 20 cell layers above the apex of the dermal papilla of the hair root; not detected in any other tissues.

In terms of biological role, in the hair cortex, hair keratin intermediate filaments are embedded in an interfilamentous matrix, consisting of hair keratin-associated proteins (KRTAP), which are essential for the formation of a rigid and resistant hair shaft through their extensive disulfide bond cross-linking with abundant cysteine residues of hair keratins. The matrix proteins include the high-sulfur and high-glycine-tyrosine keratins. This chain is Keratin-associated protein 10-7 (KRTAP10-7), found in Homo sapiens (Human).